The chain runs to 965 residues: Collagenase ColQ1 (965 aa).

Positions 1–30 (MNKKSKINKVMLSISTMALSLGALQAPASA) are cleaved as a signal peptide. Positions 31–93 (EEKVPYNVLK…KAAVKQVKES (63 aa)) are excised as a propeptide. Residues 94 to 366 (YSMADLNKMN…AVEQITTNYN (273 aa)) are activator domain. Residues 94–765 (YSMADLNKMN…VFHGIAKDDG (672 aa)) form an S1 metalloprotease domain region. The tract at residues 376–645 (DLEKIRKEGK…MQQLIDNQDK (270 aa)) is catalytic subdomain. H501 is a Zn(2+) binding site. E502 is a catalytic residue. 2 residues coordinate Zn(2+): H505 and E533. Positions 653-765 (DDYLAEHAPK…VFHGIAKDDG (113 aa)) are helper subdomain. Residues 769 to 850 (APTVNINGPY…ESKSETTVTV (82 aa)) form the PKD domain. The segment at 842 to 867 (SKSETTVTVKDGSLTESEPNNRPEEA) is disordered. Residues 845-859 (ETTVTVKDGSLTESE) are compositionally biased toward polar residues. The collagen-binding domain stretch occupies residues 853-965 (GSLTESEPNN…GDGTYKLSVK (113 aa)).

This sequence belongs to the peptidase M9B family. Collagenase subfamily. Ca(2+) is required as a cofactor. Requires Zn(2+) as cofactor.

The protein resides in the secreted. The catalysed reaction is Digestion of native collagen in the triple helical region at Xaa-|-Gly bonds. With synthetic peptides, a preference is shown for Gly at P3 and P1', Pro and Ala at P2 and P2', and hydroxyproline, Ala or Arg at P3'.. Strongly inhibited by EDTA. Not inhibited by E-64 and PMSF, broad-spectrum cysteine and serine protease inhibitors. Functionally, acts as a true collagenase, which is highly active and cleaves natively folded collagen. In vitro, can also cleave gelatin and the synthetic peptide FALGPA (furylacryloyl-Leu-Gly-Pro-Ala). Causes damage on dermal collagen (COL), resulting in gaps in the tissue, which might lead to an accelerated bacterial infiltration and penetration into deeper sites of the host. This is Collagenase ColQ1 from Bacillus cereus (strain Q1).